Consider the following 593-residue polypeptide: PiggyBac transposable element-derived protein 3 (593 aa).

Disordered regions lie at residues 27–53 (IQPP…INNL) and 69–105 (SDAE…SRRR). Over residues 38 to 47 (SDEESGDEEG) the composition is skewed to acidic residues. The residue at position 86 (S86) is a Phosphoserine.

Expressed in heart and oocytes, but not in granulosa cells (at protein level).

The protein resides in the nucleus. Its function is as follows. Binds in vitro to PGBD3-related transposable elements, called MER85s; these non-autonomous 140 bp elements are characterized by the presence of PGBD3 terminal inverted repeats and the absence of internal transposase ORF. In Homo sapiens (Human), this protein is PiggyBac transposable element-derived protein 3 (PGBD3).